Reading from the N-terminus, the 288-residue chain is ATP synthase gamma chain (288 aa).

It belongs to the ATPase gamma chain family. As to quaternary structure, F-type ATPases have 2 components, CF(1) - the catalytic core - and CF(0) - the membrane proton channel. CF(1) has five subunits: alpha(3), beta(3), gamma(1), delta(1), epsilon(1). CF(0) has three main subunits: a, b and c.

It is found in the cell membrane. Functionally, produces ATP from ADP in the presence of a proton gradient across the membrane. The gamma chain is believed to be important in regulating ATPase activity and the flow of protons through the CF(0) complex. In Shouchella clausii (strain KSM-K16) (Alkalihalobacillus clausii), this protein is ATP synthase gamma chain.